Here is a 288-residue protein sequence, read N- to C-terminus: NAD kinase (288 aa).

D70 acts as the Proton acceptor in catalysis. NAD(+) is bound by residues 70–71, 144–145, R155, K172, D174, 185–190, and Q245; these read DG, ND, and TGYSLS.

The protein belongs to the NAD kinase family. A divalent metal cation is required as a cofactor.

The protein resides in the cytoplasm. The catalysed reaction is NAD(+) + ATP = ADP + NADP(+) + H(+). Its function is as follows. Involved in the regulation of the intracellular balance of NAD and NADP, and is a key enzyme in the biosynthesis of NADP. Catalyzes specifically the phosphorylation on 2'-hydroxyl of the adenosine moiety of NAD to yield NADP. This is NAD kinase from Geobacter sp. (strain M21).